A 790-amino-acid polypeptide reads, in one-letter code: Phenylalanine--tRNA ligase beta subunit (790 aa).

The region spanning 40–149 (AEKVSGVVVG…IDAPVGTDIN (110 aa)) is the tRNA-binding domain. A B5 domain is found at 402–479 (NKQIKINLSI…RIYGYSKLPE (78 aa)). Mg(2+) contacts are provided by aspartate 457, aspartate 463, glutamate 466, and glutamate 467. Positions 698 to 789 (SKYPSVSRDI…LKTKFNIEQR (92 aa)) constitute an FDX-ACB domain.

This sequence belongs to the phenylalanyl-tRNA synthetase beta subunit family. Type 1 subfamily. Tetramer of two alpha and two beta subunits. Mg(2+) is required as a cofactor.

The protein resides in the cytoplasm. The catalysed reaction is tRNA(Phe) + L-phenylalanine + ATP = L-phenylalanyl-tRNA(Phe) + AMP + diphosphate + H(+). The protein is Phenylalanine--tRNA ligase beta subunit of Francisella tularensis subsp. tularensis (strain SCHU S4 / Schu 4).